The following is a 76-amino-acid chain: Small ribosomal subunit protein bS16 (76 aa).

This sequence belongs to the bacterial ribosomal protein bS16 family.

In Helicobacter acinonychis (strain Sheeba), this protein is Small ribosomal subunit protein bS16.